The primary structure comprises 224 residues: Peptidyl-tRNA hydrolase (224 aa).

Y27 contributes to the tRNA binding site. The Proton acceptor role is filled by H32. Residues Y78, N80, and N126 each coordinate tRNA. The segment covering 203-215 has biased composition (low complexity); that stretch reads LSGPSSDLDGSNP. The interval 203–224 is disordered; that stretch reads LSGPSSDLDGSNPAPGHGEASS.

Belongs to the PTH family. Monomer.

Its subcellular location is the cytoplasm. It carries out the reaction an N-acyl-L-alpha-aminoacyl-tRNA + H2O = an N-acyl-L-amino acid + a tRNA + H(+). Its function is as follows. Hydrolyzes ribosome-free peptidyl-tRNAs (with 1 or more amino acids incorporated), which drop off the ribosome during protein synthesis, or as a result of ribosome stalling. In terms of biological role, catalyzes the release of premature peptidyl moieties from peptidyl-tRNA molecules trapped in stalled 50S ribosomal subunits, and thus maintains levels of free tRNAs and 50S ribosomes. This chain is Peptidyl-tRNA hydrolase, found in Synechococcus sp. (strain JA-2-3B'a(2-13)) (Cyanobacteria bacterium Yellowstone B-Prime).